Here is a 196-residue protein sequence, read N- to C-terminus: Imidazoleglycerol-phosphate dehydratase (196 aa).

Belongs to the imidazoleglycerol-phosphate dehydratase family.

It is found in the cytoplasm. It catalyses the reaction D-erythro-1-(imidazol-4-yl)glycerol 3-phosphate = 3-(imidazol-4-yl)-2-oxopropyl phosphate + H2O. The protein operates within amino-acid biosynthesis; L-histidine biosynthesis; L-histidine from 5-phospho-alpha-D-ribose 1-diphosphate: step 6/9. This Dehalococcoides mccartyi (strain CBDB1) protein is Imidazoleglycerol-phosphate dehydratase.